A 138-amino-acid chain; its full sequence is Cysteine desulfuration protein SufE (138 aa).

The active-site Cysteine persulfide intermediate is the Cys51.

The protein belongs to the SufE family. As to quaternary structure, homodimer. Interacts with SufS.

It localises to the cytoplasm. It functions in the pathway cofactor biosynthesis; iron-sulfur cluster biosynthesis. Participates in cysteine desulfuration mediated by SufS. Cysteine desulfuration mobilizes sulfur from L-cysteine to yield L-alanine and constitutes an essential step in sulfur metabolism for biosynthesis of a variety of sulfur-containing biomolecules. Functions as a sulfur acceptor for SufS, by mediating the direct transfer of the sulfur atom from the S-sulfanylcysteine of SufS, an intermediate product of cysteine desulfuration process. The chain is Cysteine desulfuration protein SufE from Shigella sonnei (strain Ss046).